We begin with the raw amino-acid sequence, 188 residues long: Ribosome-recycling factor (188 aa).

This sequence belongs to the RRF family.

It localises to the cytoplasm. Its function is as follows. Responsible for the release of ribosomes from messenger RNA at the termination of protein biosynthesis. May increase the efficiency of translation by recycling ribosomes from one round of translation to another. This Caulobacter vibrioides (strain NA1000 / CB15N) (Caulobacter crescentus) protein is Ribosome-recycling factor.